Consider the following 686-residue polypeptide: MLLEGVLLVVQALQLASALDLPAGSCAFEEDTCGFDSVFAFLPWILNEEGHYVYMDTSFARQGEKAVLLSSDLQAEEWNCLRLVYQITTPPGSVSDPSQLNLYVRFEDESFDRLLWSTKEPSDSWLIASLDLQNTSKKFKILIEGVLGQGNTASIALFEIKMTAGYCIECDFEENHLCGFVNRWNPNVNWFVGGGTAKNTHSVLPQDHTFRSEHGHYMYVDSVYVKHFQEVAQLISPVTTASMSGCLSFYYQLQQGNDNVFSVYTRDMAGLYEEIWKVDSPGNAAWNLAEVEFSAPYPMEVIFEVAFNGPKGGYVALDDISFSPVHCQNQTGLPFSAVETSCDFEIGLCNFYQDKEGPGWTRVRVKANMYRAGDHTTGTGHYLLANTKFTSQPGYIGRLYGPSLPGNMQYCVRFHYAIFGFLKMSDTLAVYIFEENHVVQEKIWSVLESPRGVWMQAEISFKKPMPTKVVFMSLCKSFWDCGLVALDDITIQLGNCRSPARLPPPPGECTFDQDECAFTQEKRNRSSWHRGRGETPTSYTGPKGDHTTGVGYYMYIEASHMVYGQKAHLLSQPLRGVPGKHCLTFFYHMYGAGTGLLSVYLKREEDSEESLLWRRRGEQSISWLRALVEYSCRRRHQIIFEATRGVSIRSDIAIDDVKLQAGPCAGMEDTTEQSSGYSEDLNEIEY.

The signal sequence occupies residues 1–18; sequence MLLEGVLLVVQALQLASA. 4 MAM domains span residues 24–169, 168–329, 340–498, and 507–666; these read GSCA…YCIE, IECD…HCQN, TSCD…NCRS, and GECT…PCAG. N-linked (GlcNAc...) asparagine glycosylation is found at Asn-134 and Asn-329. Asn-524 carries an N-linked (GlcNAc...) asparagine glycan. The tract at residues 665–686 is disordered; that stretch reads AGMEDTTEQSSGYSEDLNEIEY.

O-glycosylated; contains chondroitin sulfate.

Its subcellular location is the secreted. The protein resides in the extracellular space. It is found in the extracellular matrix. In Mus musculus (Mouse), this protein is MAM domain-containing protein 2 (Mamdc2).